Reading from the N-terminus, the 238-residue chain is Probable transcriptional regulatory protein MGAS10750_Spy0264 (238 aa).

Belongs to the TACO1 family. YeeN subfamily.

Its subcellular location is the cytoplasm. The chain is Probable transcriptional regulatory protein MGAS10750_Spy0264 from Streptococcus pyogenes serotype M4 (strain MGAS10750).